A 505-amino-acid chain; its full sequence is RNA-binding region-containing protein 3 (505 aa).

Residues 15 to 90 (KTLIIRHLPR…RTLVVEFAKD (76 aa)) enclose the RRM 1 domain. 4 disordered regions span residues 96-123 (ILKDPPVSDRTAAAVAEKEKKEKQQPSV), 193-236 (PPMF…EEER), 354-374 (AQVPRQEEEQEEDEDIPSEFI), and 486-505 (ARSAKPKQESADPKKGGRKH). Residues 193–214 (PPMFEMPSGPLPPPFPPENPPL) are compositionally biased toward pro residues. Composition is skewed to acidic residues over residues 221–235 (GSEEESEYESEDEEE) and 361–370 (EEQEEDEDIP). The 84-residue stretch at 405–488 (CRLYVKNVAK…KPLVVQFARS (84 aa)) folds into the RRM 2 domain. The segment covering 491–505 (PKQESADPKKGGRKH) has biased composition (basic and acidic residues).

Component of the U11/U12 snRNPs that are part of the U12-type spliceosome.

The protein localises to the nucleus. In terms of biological role, participates in pre-mRNA U12-dependent splicing, performed by the minor spliceosome which removes U12-type introns. U12-type introns comprise less than 1% of all non-coding sequences. This Danio rerio (Zebrafish) protein is RNA-binding region-containing protein 3.